The sequence spans 612 residues: Glutamine--fructose-6-phosphate aminotransferase [isomerizing] (612 aa).

Cys-2 serves as the catalytic Nucleophile; for GATase activity. The 220-residue stretch at 2–221 folds into the Glutamine amidotransferase type-2 domain; the sequence is CGIVGIVSQR…NGDIAEITNS (220 aa). SIS domains lie at 289 to 429 and 461 to 602; these read FNKT…IRKI and LVKN…VDHP. Catalysis depends on Lys-607, which acts as the For Fru-6P isomerization activity.

In terms of assembly, homodimer.

It localises to the cytoplasm. It carries out the reaction D-fructose 6-phosphate + L-glutamine = D-glucosamine 6-phosphate + L-glutamate. Catalyzes the first step in hexosamine metabolism, converting fructose-6P into glucosamine-6P using glutamine as a nitrogen source. The chain is Glutamine--fructose-6-phosphate aminotransferase [isomerizing] from Wigglesworthia glossinidia brevipalpis.